The primary structure comprises 332 residues: MLMTRPNLKGRSFLAEKDFTPEELLYFLDLAAELKEKKKNGIPHHYLEGKNVALLFEKTSTRTRCAFTVACTDLGANPEYLGKGDIQLGKKESVEDTAKVLGRMFDGIEFRGFNHETVESLAQNSGVPVWNGLTDMWHPTQTLADLLTIREHVGKLKNVKLVYVGDGRNNVANSLLVGGAIVGMDVRICTPESLWPAQEVIDLAKKYNEQVMITSNVEEAVASADVIYTDVWVSMGEEEKFAERVELLKPYQVNMKMIKETGNKNVIFLHCLPAFHDVETMYGEEVYEKYGLKEMEVTDEVFRSKHSKVFDQAENRMHTIKAVMAATLGNME.

Carbamoyl phosphate contacts are provided by residues 60–63, Gln87, Arg111, and 138–141; these read STRT and HPTQ. L-ornithine-binding positions include Asn170, Asp230, and 234 to 235; that span reads SM. Carbamoyl phosphate-binding positions include 271–272 and Arg316; that span reads CL.

It belongs to the aspartate/ornithine carbamoyltransferase superfamily. OTCase family.

The protein localises to the cytoplasm. It carries out the reaction carbamoyl phosphate + L-ornithine = L-citrulline + phosphate + H(+). It functions in the pathway amino-acid degradation; L-arginine degradation via ADI pathway; carbamoyl phosphate from L-arginine: step 2/2. Functionally, reversibly catalyzes the transfer of the carbamoyl group from carbamoyl phosphate (CP) to the N(epsilon) atom of ornithine (ORN) to produce L-citrulline. This Bacillus thuringiensis subsp. konkukian (strain 97-27) protein is Ornithine carbamoyltransferase, catabolic.